Consider the following 178-residue polypeptide: Large ribosomal subunit protein uL6 (178 aa).

Belongs to the universal ribosomal protein uL6 family. Part of the 50S ribosomal subunit.

Its function is as follows. This protein binds to the 23S rRNA, and is important in its secondary structure. It is located near the subunit interface in the base of the L7/L12 stalk, and near the tRNA binding site of the peptidyltransferase center. This Helicobacter hepaticus (strain ATCC 51449 / 3B1) protein is Large ribosomal subunit protein uL6.